We begin with the raw amino-acid sequence, 382 residues long: Dual-specificity RNA methyltransferase RlmN (382 aa).

Catalysis depends on E95, which acts as the Proton acceptor. A Radical SAM core domain is found at 101 to 347 (EDDRGTLCIS…TTVRKTRGDD (247 aa)). C108 and C352 are disulfide-bonded. Residues C115, C119, and C122 each contribute to the [4Fe-4S] cluster site. S-adenosyl-L-methionine contacts are provided by residues 178 to 179 (GE), S210, 232 to 234 (SLH), and N309. C352 acts as the S-methylcysteine intermediate in catalysis.

This sequence belongs to the radical SAM superfamily. RlmN family. It depends on [4Fe-4S] cluster as a cofactor.

It localises to the cytoplasm. The enzyme catalyses adenosine(2503) in 23S rRNA + 2 reduced [2Fe-2S]-[ferredoxin] + 2 S-adenosyl-L-methionine = 2-methyladenosine(2503) in 23S rRNA + 5'-deoxyadenosine + L-methionine + 2 oxidized [2Fe-2S]-[ferredoxin] + S-adenosyl-L-homocysteine. It catalyses the reaction adenosine(37) in tRNA + 2 reduced [2Fe-2S]-[ferredoxin] + 2 S-adenosyl-L-methionine = 2-methyladenosine(37) in tRNA + 5'-deoxyadenosine + L-methionine + 2 oxidized [2Fe-2S]-[ferredoxin] + S-adenosyl-L-homocysteine. Its function is as follows. Specifically methylates position 2 of adenine 2503 in 23S rRNA and position 2 of adenine 37 in tRNAs. m2A2503 modification seems to play a crucial role in the proofreading step occurring at the peptidyl transferase center and thus would serve to optimize ribosomal fidelity. This is Dual-specificity RNA methyltransferase RlmN from Bordetella avium (strain 197N).